The sequence spans 777 residues: Transcriptional regulator QRICH1 (777 aa).

N-acetylmethionine is present on Met1. In terms of domain architecture, CARD spans 6-48 (ENTISFEEYIRVKARSVPQHRMKEFLDSLASKGPEALQEFQQT). 2 disordered regions span residues 140-164 (IQGQAPQSAAPSIQTPSLQSPSPSQ) and 219-240 (ALSPPPSQQGSPREGERRVGTA). Ser346 bears the Phosphoserine mark. Residues Lys354 and Lys359 each participate in a glycyl lysine isopeptide (Lys-Gly) (interchain with G-Cter in SUMO2) cross-link. A disordered region spans residues 420 to 440 (QQQPQQQTAQEQTPPPQQQQQ). At Ser465 the chain carries Phosphoserine.

Expressed highly in prefrontal cortex, craniofacial area and near the limbs of mouse embryos. Expressed in heart, skeletal muscle, liver, kidney, lung, brain, spleen, intestine and growth plate in mice.

The protein resides in the nucleus. The protein localises to the cytoplasm. Its subcellular location is the cell membrane. Transcriptional regulator that acts as a mediator of the integrated stress response (ISR) through transcriptional control of protein homeostasis under conditions of ER stress. Controls the outcome of the unfolded protein response (UPR), an ER-stress response pathway that either promotes recovery of ER homeostasis and cell survival, or triggers the terminal UPR which elicits programmed cell death when ER stress is prolonged and unresolved. ER stress induces QRICH1 translation by a ribosome translation re-initiation mechanism in response to EIF2S1/eIF-2-alpha phosphorylation, and stress-induced QRICH1 regulates a transcriptional program associated with protein translation, protein secretion-mediated proteotoxicity and cell death during the terminal UPR. May cooperate with ATF4 transcription factor signaling to regulate ER homeostasis which is critical for cell viability. Up-regulates CASP3/caspase-3 activity in epithelial cells under ER stress. Central regulator of proteotoxicity associated with ER stress-mediated inflammatory diseases in the intestines and liver. Involved in chondrocyte hypertrophy, a process required for normal longitudinal bone growth. This is Transcriptional regulator QRICH1 from Mus musculus (Mouse).